The chain runs to 357 residues: RNA-binding protein 4B (357 aa).

RRM domains lie at 2–72 (VKLF…ASKN) and 78–148 (TKLH…LSTS). A CCHC-type zinc finger spans residues 160–177 (SGCYRCGKEGHWSKECPV). Residues 196–357 (AVRTPYTMGY…YVDRTRYSAF (162 aa)) are interaction with TNPO3.

In terms of assembly, interacts with TNPO3, which may mediate nuclear import of the protein. As to expression, expressed in the suprachiasmatic nucleus (SCN) (at protein level). Expressed in the suprachiasmatic nucleus (SCN).

It localises to the nucleus. The protein localises to the nucleolus. Required for the translational activation of PER1 mRNA in response to circadian clock. Binds directly to the 3'-UTR of the PER1 mRNA. This chain is RNA-binding protein 4B (Rbm4b), found in Mus musculus (Mouse).